A 142-amino-acid chain; its full sequence is Putative nickel-responsive regulator (142 aa).

Ni(2+) contacts are provided by His-77, His-88, His-90, and Cys-96.

The protein belongs to the transcriptional regulatory CopG/NikR family. In terms of assembly, homotetramer. Requires Ni(2+) as cofactor.

Its function is as follows. Transcriptional regulator. The chain is Putative nickel-responsive regulator from Halobacterium salinarum (strain ATCC 700922 / JCM 11081 / NRC-1) (Halobacterium halobium).